Consider the following 469-residue polypeptide: DNA repair and recombination protein rad22 (469 aa).

Positions 265-296 (PAANNHHSEKAGTQINNKDKGSHNSAKPVQRS) are disordered. Residues 287-296 (HNSAKPVQRS) show a composition bias toward polar residues. Ser296 and Ser319 each carry phosphoserine. The segment at 429-469 (LHDSTTSHNKSDLMRTNSDPQSAMRSRENYDATVDKKAKKG) is disordered. Residues 431 to 452 (DSTTSHNKSDLMRTNSDPQSAM) show a composition bias toward polar residues. Positions 453-469 (RSRENYDATVDKKAKKG) are enriched in basic and acidic residues.

The protein belongs to the RAD52 family. As to quaternary structure, interacts with rhp51.

It is found in the nucleus. Its function is as follows. Active in the repair of DNA damage and in mating-type switching. Probably involved in the repair of DNA double-strands breaks. Has a role in promoting S phase completion. This is DNA repair and recombination protein rad22 (rad22) from Schizosaccharomyces pombe (strain 972 / ATCC 24843) (Fission yeast).